Reading from the N-terminus, the 450-residue chain is L-galactonate dehydratase (450 aa).

Lys-221 is an active-site residue. Residues Asp-251, Glu-277, and Glu-306 each contribute to the Mg(2+) site. The active site involves His-356.

The protein belongs to the mandelate racemase/muconate lactonizing enzyme family. Requires Mg(2+) as cofactor.

The enzyme catalyses L-galactonate = 2-dehydro-3-deoxy-L-galactonate + H2O. It participates in carbohydrate acid metabolism. Functionally, mediates the conversion of L-galactonate to 2-dehydro-3-deoxy-L-galactonate, the second step in D-galacturonate catabolic process. The sequence is that of L-galactonate dehydratase (lgd1) from Hypocrea jecorina (Trichoderma reesei).